We begin with the raw amino-acid sequence, 284 residues long: 4-hydroxy-3-methylbut-2-enyl diphosphate reductase (284 aa).

[4Fe-4S] cluster is bound at residue Cys-12. Residues His-40 and His-76 each contribute to the (2E)-4-hydroxy-3-methylbut-2-enyl diphosphate site. The dimethylallyl diphosphate site is built by His-40 and His-76. 2 residues coordinate isopentenyl diphosphate: His-40 and His-76. Residue Cys-98 participates in [4Fe-4S] cluster binding. (2E)-4-hydroxy-3-methylbut-2-enyl diphosphate is bound at residue His-126. Position 126 (His-126) interacts with dimethylallyl diphosphate. His-126 is a binding site for isopentenyl diphosphate. Glu-128 functions as the Proton donor in the catalytic mechanism. (2E)-4-hydroxy-3-methylbut-2-enyl diphosphate is bound at residue Thr-161. [4Fe-4S] cluster is bound at residue Cys-191. The (2E)-4-hydroxy-3-methylbut-2-enyl diphosphate site is built by Ser-219, Ser-220, Asn-221, and Ser-263. Positions 219, 220, 221, and 263 each coordinate dimethylallyl diphosphate. Isopentenyl diphosphate is bound by residues Ser-219, Ser-220, Asn-221, and Ser-263.

Belongs to the IspH family. [4Fe-4S] cluster is required as a cofactor.

It catalyses the reaction isopentenyl diphosphate + 2 oxidized [2Fe-2S]-[ferredoxin] + H2O = (2E)-4-hydroxy-3-methylbut-2-enyl diphosphate + 2 reduced [2Fe-2S]-[ferredoxin] + 2 H(+). The enzyme catalyses dimethylallyl diphosphate + 2 oxidized [2Fe-2S]-[ferredoxin] + H2O = (2E)-4-hydroxy-3-methylbut-2-enyl diphosphate + 2 reduced [2Fe-2S]-[ferredoxin] + 2 H(+). It functions in the pathway isoprenoid biosynthesis; dimethylallyl diphosphate biosynthesis; dimethylallyl diphosphate from (2E)-4-hydroxy-3-methylbutenyl diphosphate: step 1/1. Its pathway is isoprenoid biosynthesis; isopentenyl diphosphate biosynthesis via DXP pathway; isopentenyl diphosphate from 1-deoxy-D-xylulose 5-phosphate: step 6/6. In terms of biological role, catalyzes the conversion of 1-hydroxy-2-methyl-2-(E)-butenyl 4-diphosphate (HMBPP) into a mixture of isopentenyl diphosphate (IPP) and dimethylallyl diphosphate (DMAPP). Acts in the terminal step of the DOXP/MEP pathway for isoprenoid precursor biosynthesis. The polypeptide is 4-hydroxy-3-methylbut-2-enyl diphosphate reductase (Petrotoga mobilis (strain DSM 10674 / SJ95)).